The following is a 407-amino-acid chain: S-adenosylmethionine synthase (407 aa).

H19 is a binding site for ATP. D21 contributes to the Mg(2+) binding site. E47 lines the K(+) pocket. Residues E60 and Q103 each contribute to the L-methionine site. The interval 103 to 113 (QSQEIADGVDN) is flexible loop. Positions 107–134 (IADGVDNSDEARTNGDVEEDDRAGAGDQ) are disordered. Residues 178–180 (DGK), D258, 264–265 (RK), A281, and K285 contribute to the ATP site. D258 contributes to the L-methionine binding site. K289 is a binding site for L-methionine.

Belongs to the AdoMet synthase family. Homotetramer; dimer of dimers. The cofactor is Mg(2+). Requires K(+) as cofactor.

It localises to the cytoplasm. The catalysed reaction is L-methionine + ATP + H2O = S-adenosyl-L-methionine + phosphate + diphosphate. The protein operates within amino-acid biosynthesis; S-adenosyl-L-methionine biosynthesis; S-adenosyl-L-methionine from L-methionine: step 1/1. Its function is as follows. Catalyzes the formation of S-adenosylmethionine (AdoMet) from methionine and ATP. The overall synthetic reaction is composed of two sequential steps, AdoMet formation and the subsequent tripolyphosphate hydrolysis which occurs prior to release of AdoMet from the enzyme. The chain is S-adenosylmethionine synthase from Corynebacterium glutamicum (strain ATCC 13032 / DSM 20300 / JCM 1318 / BCRC 11384 / CCUG 27702 / LMG 3730 / NBRC 12168 / NCIMB 10025 / NRRL B-2784 / 534).